The following is a 138-amino-acid chain: Nucleoside diphosphate kinase (138 aa).

ATP is bound by residues K9, F57, R85, T91, R102, and N112. Residue H120 is the Pros-phosphohistidine intermediate of the active site.

It belongs to the NDK family. In terms of assembly, homotetramer. The cofactor is Mg(2+).

It is found in the cytoplasm. The enzyme catalyses a 2'-deoxyribonucleoside 5'-diphosphate + ATP = a 2'-deoxyribonucleoside 5'-triphosphate + ADP. It catalyses the reaction a ribonucleoside 5'-diphosphate + ATP = a ribonucleoside 5'-triphosphate + ADP. Functionally, major role in the synthesis of nucleoside triphosphates other than ATP. The ATP gamma phosphate is transferred to the NDP beta phosphate via a ping-pong mechanism, using a phosphorylated active-site intermediate. This Streptococcus agalactiae serotype III (strain NEM316) protein is Nucleoside diphosphate kinase.